Reading from the N-terminus, the 219-residue chain is Protein-L-isoaspartate O-methyltransferase 2 (219 aa).

Ser60 is a catalytic residue.

This sequence belongs to the methyltransferase superfamily. L-isoaspartyl/D-aspartyl protein methyltransferase family.

The protein resides in the cytoplasm. It catalyses the reaction [protein]-L-isoaspartate + S-adenosyl-L-methionine = [protein]-L-isoaspartate alpha-methyl ester + S-adenosyl-L-homocysteine. Its function is as follows. Catalyzes the methyl esterification of L-isoaspartyl residues in peptides and proteins that result from spontaneous decomposition of normal L-aspartyl and L-asparaginyl residues. It plays a role in the repair and/or degradation of damaged proteins. In Archaeoglobus fulgidus (strain ATCC 49558 / DSM 4304 / JCM 9628 / NBRC 100126 / VC-16), this protein is Protein-L-isoaspartate O-methyltransferase 2 (pcm2).